The following is a 518-amino-acid chain: GMP synthase [glutamine-hydrolyzing] (518 aa).

Positions 6–200 (RLLIIDFGSQ…FVKLAGFKGD (195 aa)) constitute a Glutamine amidotransferase type-1 domain. Cys84 (nucleophile) is an active-site residue. Active-site residues include His175 and Glu177. A GMPS ATP-PPase domain is found at 201 to 393 (WTMGAYREEA…LGLPDSFIGR (193 aa)). 228–234 (SGGVDSS) serves as a coordination point for ATP.

Homodimer.

The enzyme catalyses XMP + L-glutamine + ATP + H2O = GMP + L-glutamate + AMP + diphosphate + 2 H(+). The protein operates within purine metabolism; GMP biosynthesis; GMP from XMP (L-Gln route): step 1/1. Its function is as follows. Catalyzes the synthesis of GMP from XMP. The sequence is that of GMP synthase [glutamine-hydrolyzing] from Cereibacter sphaeroides (strain ATCC 17025 / ATH 2.4.3) (Rhodobacter sphaeroides).